We begin with the raw amino-acid sequence, 679 residues long: UvrABC system protein B (679 aa).

In terms of domain architecture, Helicase ATP-binding spans 25-176 (EGVNGGERYQ…NLRGSLRDLV (152 aa)). An ATP-binding site is contributed by 38–45 (GATGTGKT). The Beta-hairpin signature appears at 91–114 (YYDYYQPEAYVPVSDTYIAKTASI). The region spanning 429-591 (QVDDLLGEIR…ITPTAAGKKA (163 aa)) is the Helicase C-terminal domain. The UVR domain maps to 638-673 (PELIDQLELKMKESAKKLDFEEAANLRDRIKKLRQK).

Belongs to the UvrB family. As to quaternary structure, forms a heterotetramer with UvrA during the search for lesions. Interacts with UvrC in an incision complex.

It localises to the cytoplasm. The UvrABC repair system catalyzes the recognition and processing of DNA lesions. A damage recognition complex composed of 2 UvrA and 2 UvrB subunits scans DNA for abnormalities. Upon binding of the UvrA(2)B(2) complex to a putative damaged site, the DNA wraps around one UvrB monomer. DNA wrap is dependent on ATP binding by UvrB and probably causes local melting of the DNA helix, facilitating insertion of UvrB beta-hairpin between the DNA strands. Then UvrB probes one DNA strand for the presence of a lesion. If a lesion is found the UvrA subunits dissociate and the UvrB-DNA preincision complex is formed. This complex is subsequently bound by UvrC and the second UvrB is released. If no lesion is found, the DNA wraps around the other UvrB subunit that will check the other stand for damage. The protein is UvrABC system protein B of Synechococcus sp. (strain CC9311).